The sequence spans 289 residues: Formamidopyrimidine-DNA glycosylase (289 aa).

The Schiff-base intermediate with DNA role is filled by Pro2. The active-site Proton donor is the Glu3. Lys61 serves as the catalytic Proton donor; for beta-elimination activity. DNA is bound by residues His97, Arg119, and Lys168. The segment at 254 to 288 adopts an FPG-type zinc-finger fold; it reads NAYGRAGKPCPRCGEPIVRVQWTNRSSHFCPQCQS. The Proton donor; for delta-elimination activity role is filled by Arg278.

It belongs to the FPG family. As to quaternary structure, monomer. Zn(2+) serves as cofactor.

It carries out the reaction Hydrolysis of DNA containing ring-opened 7-methylguanine residues, releasing 2,6-diamino-4-hydroxy-5-(N-methyl)formamidopyrimidine.. It catalyses the reaction 2'-deoxyribonucleotide-(2'-deoxyribose 5'-phosphate)-2'-deoxyribonucleotide-DNA = a 3'-end 2'-deoxyribonucleotide-(2,3-dehydro-2,3-deoxyribose 5'-phosphate)-DNA + a 5'-end 5'-phospho-2'-deoxyribonucleoside-DNA + H(+). Functionally, involved in base excision repair of DNA damaged by oxidation or by mutagenic agents. Acts as a DNA glycosylase that recognizes and removes damaged bases. Has a preference for oxidized purines, such as 7,8-dihydro-8-oxoguanine (8-oxoG). Has AP (apurinic/apyrimidinic) lyase activity and introduces nicks in the DNA strand. Cleaves the DNA backbone by beta-delta elimination to generate a single-strand break at the site of the removed base with both 3'- and 5'-phosphates. The sequence is that of Formamidopyrimidine-DNA glycosylase from Corynebacterium urealyticum (strain ATCC 43042 / DSM 7109).